Here is a 362-residue protein sequence, read N- to C-terminus: Heat-inducible transcription repressor HrcA (362 aa).

It belongs to the HrcA family.

Its function is as follows. Negative regulator of class I heat shock genes (grpE-dnaK-dnaJ and groELS operons). Prevents heat-shock induction of these operons. The protein is Heat-inducible transcription repressor HrcA of Rhizobium johnstonii (strain DSM 114642 / LMG 32736 / 3841) (Rhizobium leguminosarum bv. viciae).